Here is a 479-residue protein sequence, read N- to C-terminus: Ribulose bisphosphate carboxylase large chain (479 aa).

Residues 1–2 (MS) constitute a propeptide that is removed on maturation. Substrate-binding residues include Asn123 and Thr173. Residue Lys175 is the Proton acceptor of the active site. Position 177 (Lys177) interacts with substrate. Residues Lys201, Asp203, and Glu204 each contribute to the Mg(2+) site. Residue Lys201 is modified to N6-carboxylysine. At Ser208 the chain carries Phosphoserine. Catalysis depends on His294, which acts as the Proton acceptor. Positions 295 and 327 each coordinate substrate. Thr330 bears the Phosphothreonine mark. Ser379 provides a ligand contact to substrate.

The protein belongs to the RuBisCO large chain family. Type I subfamily. In terms of assembly, heterohexadecamer of 8 large chains and 8 small chains; disulfide-linked. The disulfide link is formed within the large subunit homodimers. It depends on Mg(2+) as a cofactor. The disulfide bond which can form in the large chain dimeric partners within the hexadecamer appears to be associated with oxidative stress and protein turnover.

The protein localises to the plastid. It is found in the chloroplast. It carries out the reaction 2 (2R)-3-phosphoglycerate + 2 H(+) = D-ribulose 1,5-bisphosphate + CO2 + H2O. It catalyses the reaction D-ribulose 1,5-bisphosphate + O2 = 2-phosphoglycolate + (2R)-3-phosphoglycerate + 2 H(+). Its function is as follows. RuBisCO catalyzes two reactions: the carboxylation of D-ribulose 1,5-bisphosphate, the primary event in carbon dioxide fixation, as well as the oxidative fragmentation of the pentose substrate in the photorespiration process. Both reactions occur simultaneously and in competition at the same active site. This is Ribulose bisphosphate carboxylase large chain from Lobularia maritima (Sweet alyssum).